We begin with the raw amino-acid sequence, 134 residues long: Cell division protein SepF (134 aa).

It belongs to the SepF family. As to quaternary structure, homodimer. Interacts with FtsZ.

The protein resides in the cytoplasm. In terms of biological role, cell division protein that is part of the divisome complex and is recruited early to the Z-ring. Probably stimulates Z-ring formation, perhaps through the cross-linking of FtsZ protofilaments. Its function overlaps with FtsA. The protein is Cell division protein SepF of Caldanaerobacter subterraneus subsp. tengcongensis (strain DSM 15242 / JCM 11007 / NBRC 100824 / MB4) (Thermoanaerobacter tengcongensis).